A 135-amino-acid chain; its full sequence is Protein PsiE homolog (135 aa).

Transmembrane regions (helical) follow at residues Leu14 to Val34, Tyr54 to Val74, His82 to Val102, and Pro107 to Ala127.

Belongs to the PsiE family.

The protein localises to the cell inner membrane. The sequence is that of Protein PsiE homolog from Pectobacterium atrosepticum (strain SCRI 1043 / ATCC BAA-672) (Erwinia carotovora subsp. atroseptica).